The chain runs to 223 residues: NADH-quinone oxidoreductase subunit C (223 aa).

It belongs to the complex I 30 kDa subunit family. NDH-1 is composed of 14 different subunits. Subunits NuoB, C, D, E, F, and G constitute the peripheral sector of the complex.

The protein resides in the cell inner membrane. The catalysed reaction is a quinone + NADH + 5 H(+)(in) = a quinol + NAD(+) + 4 H(+)(out). Functionally, NDH-1 shuttles electrons from NADH, via FMN and iron-sulfur (Fe-S) centers, to quinones in the respiratory chain. The immediate electron acceptor for the enzyme in this species is believed to be ubiquinone. Couples the redox reaction to proton translocation (for every two electrons transferred, four hydrogen ions are translocated across the cytoplasmic membrane), and thus conserves the redox energy in a proton gradient. In Hydrogenovibrio crunogenus (strain DSM 25203 / XCL-2) (Thiomicrospira crunogena), this protein is NADH-quinone oxidoreductase subunit C.